The following is an 81-amino-acid chain: MRKLALAAIQFYRYAISPLMANHCRFHPSCSCYAHEAISTHGLLRGGWLSLRRLGRCHPWNPGGYDPVPPIKTSRSSSMAE.

The tract at residues 59–81 (PWNPGGYDPVPPIKTSRSSSMAE) is disordered.

This sequence belongs to the UPF0161 family.

It is found in the cell inner membrane. Functionally, could be involved in insertion of integral membrane proteins into the membrane. The protein is Putative membrane protein insertion efficiency factor of Azotobacter vinelandii (strain DJ / ATCC BAA-1303).